The chain runs to 389 residues: Liposome tubulation protein MamY (389 aa).

The Cytoplasmic portion of the chain corresponds to 1–31; sequence MAIAAIMGDVLMLMGFNKAAFGKLNSASRAA. The helical transmembrane segment at 32–52 threads the bilayer; the sequence is LIGAVIWAVLSIVYLTIFNGW. Residues 53 to 62 lie on the Lumenal side of the membrane; it reads KNLFTMLPHE. Residues 63–83 form a helical membrane-spanning segment; sequence FFIVLLSIALPIGLTVLILML. The Cytoplasmic segment spans residues 84 to 389; the sequence is SRIVKSVDTL…TETAPDSGMD (306 aa).

This sequence belongs to the magnetosome MamY family.

The protein localises to the magnetosome membrane. Causes tubulation when added to magnetosome-derived liposomes, binds liposomes; may be involved in constriction of the cell inner membrane to form mature magnetosomes. Binds preferentially to cardiolipin, a component of bacterial membranes, with very poor to no binding of other tested (phospho)lipids. Addition of cardiolipin to magnetosome-derived lipids increases tubulation. May function with MamX, MamZ amd Mms6. The protein is Liposome tubulation protein MamY of Paramagnetospirillum magneticum (strain ATCC 700264 / AMB-1) (Magnetospirillum magneticum).